A 144-amino-acid polypeptide reads, in one-letter code: Peptide methionine sulfoxide reductase MsrB (144 aa).

Residues 5-128 (QEELRQRIGH…NSAALDFIPY (124 aa)) form the MsrB domain. Cys-117 functions as the Nucleophile in the catalytic mechanism.

It belongs to the MsrB Met sulfoxide reductase family.

It catalyses the reaction L-methionyl-[protein] + [thioredoxin]-disulfide + H2O = L-methionyl-(R)-S-oxide-[protein] + [thioredoxin]-dithiol. The chain is Peptide methionine sulfoxide reductase MsrB from Streptococcus agalactiae serotype Ia (strain ATCC 27591 / A909 / CDC SS700).